The sequence spans 200 residues: Sec-independent protein translocase protein TatB (200 aa).

The helical transmembrane segment at 2–22 threads the bilayer; sequence LPDIGGTELLIIAAVALIVVG. Residues 160 to 200 are disordered; the sequence is KAPRKRASQKQEITVEAPKAVRAPRKRASKAGDSTASDIVS. Polar residues predominate over residues 191–200; the sequence is GDSTASDIVS.

The protein belongs to the TatB family. In terms of assembly, the Tat system comprises two distinct complexes: a TatABC complex, containing multiple copies of TatA, TatB and TatC subunits, and a separate TatA complex, containing only TatA subunits. Substrates initially bind to the TatABC complex, which probably triggers association of the separate TatA complex to form the active translocon.

It localises to the cell inner membrane. Functionally, part of the twin-arginine translocation (Tat) system that transports large folded proteins containing a characteristic twin-arginine motif in their signal peptide across membranes. Together with TatC, TatB is part of a receptor directly interacting with Tat signal peptides. TatB may form an oligomeric binding site that transiently accommodates folded Tat precursor proteins before their translocation. This is Sec-independent protein translocase protein TatB from Caulobacter vibrioides (strain ATCC 19089 / CIP 103742 / CB 15) (Caulobacter crescentus).